The primary structure comprises 192 residues: 7-methyl-GTP pyrophosphatase (192 aa).

Catalysis depends on aspartate 70, which acts as the Proton acceptor.

It belongs to the Maf family. YceF subfamily. The cofactor is a divalent metal cation.

It localises to the cytoplasm. The catalysed reaction is N(7)-methyl-GTP + H2O = N(7)-methyl-GMP + diphosphate + H(+). Functionally, nucleoside triphosphate pyrophosphatase that hydrolyzes 7-methyl-GTP (m(7)GTP). May have a dual role in cell division arrest and in preventing the incorporation of modified nucleotides into cellular nucleic acids. The polypeptide is 7-methyl-GTP pyrophosphatase (Xanthomonas campestris pv. campestris (strain 8004)).